The primary structure comprises 237 residues: MVFGTLYTFPGDQCRTIAIKAVAKANGLDLDIRETPRTPDHLSISKLGKVPAFQGADSFKLFECMAIALYITSQNEQTTLLGKDKKEYAEIIKWMSFFNTEIVILMTQQLLPQLGVIPYDRDQVEFFANMTQRSVDVVEEYLQDRTFLVGDQLSLADLFCAGNISLGFQFFYGKAWRQQNPNVSRWYEMVCHQPIYAAVTDKFQLLDEPKLTNNPPEKKPETVPKNGAAVAIEATQA.

The region spanning 2-79 (VFGTLYTFPG…YITSQNEQTT (78 aa)) is the GST N-terminal domain. Glutathione-binding residues include Arg-37, Lys-49, Val-50, Glu-63, Cys-64, and Asn-99. Lys-49 is a substrate binding site. The 139-residue stretch at 84-222 (DKKEYAEIIK…NNPPEKKPET (139 aa)) folds into the GST C-terminal domain. Gln-108 serves as a coordination point for substrate. Residues 208 to 222 (EPKLTNNPPEKKPET) are compositionally biased toward basic and acidic residues. The disordered stretch occupies residues 208 to 237 (EPKLTNNPPEKKPETVPKNGAAVAIEATQA).

It belongs to the GST superfamily. Requires glutathione as cofactor.

Its pathway is secondary metabolite biosynthesis. In terms of biological role, glutathione S-transferase; part of the gene cluster that mediates the biosynthesis of pseurotin A, a competitive inhibitor of chitin synthase and an inducer of nerve-cell proliferation. The PKS-NRPS hybrid synthetase psoA is responsible for the biosynthesis of azaspirene, one of the first intermediates having the 1-oxa-7-azaspiro[4,4]-non-2-ene-4,6-dione core of pseurotin, via condensation of one acetyl-CoA, 4 malonyl-CoA, and a L-phenylalanine molecule. The dual-functional monooxygenase/methyltransferase psoF seems to be involved in the addition of the C3 methyl group onto the pseurotin scaffold. Azaspirene is then converted to synerazol through 4 steps including oxidation of C17 by the cytochrome P450 monooxygenase psoD, O-methylation of the hydroxy group of C8 by the methyltransferase psoC, and the trans-to-cis isomerization of the C13 olefin by the glutathione S-transferase psoE. The fourth step of synerazol production is performed by the dual-functional monooxygenase/methyltransferase psoF which seems to catalyze the epoxidation of the intermediate deepoxy-synerazol. Synerazol can be attacked by a water molecule nonenzymatically at two different positions to yield two diol products, pseurotin A and pseurotin D. This is Glutathione S-transferase psoE from Aspergillus fumigatus (strain ATCC MYA-4609 / CBS 101355 / FGSC A1100 / Af293) (Neosartorya fumigata).